A 461-amino-acid polypeptide reads, in one-letter code: Coronin-1A (461 aa).

Residue S2 is modified to N-acetylserine. S2 carries the post-translational modification Phosphoserine; by PKC. WD repeat units lie at residues 13 to 63 (HVFG…LVLP), 73 to 110 (NVPL…MVWE), 123 to 160 (PVVT…LVWD), 164 to 204 (GAAV…RVIE), 207 to 251 (KGTV…ALWD), 258 to 296 (PLSL…RYFE), and 302 to 349 (PFLH…EPIA). Positions 407-418 (NRGLDSARRRAT) are enriched in basic and acidic residues. The disordered stretch occupies residues 407 to 431 (NRGLDSARRRATPEPSSTLSSDTVS). A Phosphoserine; by PKC modification is found at S412. Position 418 is a phosphothreonine (T418). Over residues 420 to 430 (EPSSTLSSDTV) the composition is skewed to polar residues. Residue S422 is modified to Phosphoserine. Residues 425-461 (LSSDTVSRLEEDVRNLNAIVQKLQERLDRLEETVQAK) adopt a coiled-coil conformation.

It belongs to the WD repeat coronin family. In terms of assembly, binds actin. In terms of processing, phosphorylation at Ser-412 by PKC strongly down-regulates the association with actin. Post-translationally, polyubiquitinated by RNF128 with 'Lys-48'-linked chains, leading to proteasomal degradation.

It is found in the cytoplasm. The protein localises to the cytoskeleton. Its subcellular location is the cell cortex. It localises to the cytoplasmic vesicle. The protein resides in the phagosome membrane. Its function is as follows. May be a crucial component of the cytoskeleton of highly motile cells, functioning both in the invagination of large pieces of plasma membrane, as well as in forming protrusions of the plasma membrane involved in cell locomotion. This is Coronin-1A (Coro1a) from Rattus norvegicus (Rat).